The chain runs to 207 residues: M-zodatoxin-Lt4a (207 aa).

A signal peptide spans 1–22 (MKFSIIALALAVAFVCVAESRS). Residues 23–43 (EEEGYDVSEEIQAEELEEAER) constitute a propeptide that is removed on maturation. The Processing quadruplet motif 1 signature appears at 40–43 (EAER). Glutamine 61 carries the post-translational modification Glutamine amide. The short motif at 63 to 66 (REDS) is the Inverted processing quadruplet motif 1 element. The propeptide occupies 63–71 (REDSEEAGR). The short motif at 68-71 (EAGR) is the Processing quadruplet motif 2 element. Glutamine 89 is modified (glutamine amide). The Inverted processing quadruplet motif 2 signature appears at 91-94 (REDS). A propeptide spanning residues 91-99 (REDSEEAGR) is cleaved from the precursor. The Processing quadruplet motif 3 signature appears at 96-99 (EAGR). The residue at position 117 (glutamine 117) is a Glutamine amide. Positions 119 to 122 (REDS) match the Inverted processing quadruplet motif 3 motif. The propeptide occupies 119–127 (REDSEEAGR). The Processing quadruplet motif 4 signature appears at 124–127 (EAGR). Glutamine 145 carries the glutamine amide modification. Positions 147 to 150 (REDS) match the Inverted processing quadruplet motif 4 motif. The propeptide occupies 147 to 155 (REDSEEAGR). A Processing quadruplet motif 5 motif is present at residues 152 to 155 (EAGR). Glutamine 173 is subject to Glutamine amide. The Inverted processing quadruplet motif 5 signature appears at 175 to 178 (REDT). The propeptide occupies 175–182 (REDTEEAR). The short motif at 179–182 (EEAR) is the Processing quadruplet motif 6 element. Residue phenylalanine 206 is modified to Phenylalanine amide.

Belongs to the cationic peptide 03 (latarcin) family. 04 subfamily. Post-translationally, cleavage of the propeptide depends on the processing quadruplet motif (PQM) (XXXR, with at least one of X being E) and the inverted PQM (RXXX, with at least one of X being E). As to expression, expressed by the venom gland.

It localises to the secreted. Its function is as follows. M-zodatoxin-Lt4a: Has antimicrobial activity against Gram-positive bacteria (A.globiformis VKM Ac-1112 (MIC=0.3 uM), and B.subtilis VKM B-501 (MIC=1.1 uM)), Gram-negative bacteria (E.coli DH5-alpha (MIC=4.5 uM), E.coli MH1 (MIC=3.2 uM), and P.aeruginosa PAO1 (MIC&gt;35 uM)), and yeasts (P.pastoris GS115 (MIC=36 uM), and S.cerevisiae Y190 (MIC=18 uM)). Does not have hemolytic activity against rabbit erythrocytes. Causes paralysis, but is not lethal when injected into insect (M.domestica) larvae. Shows no antimicrobial activity against Gram-positive bacterium B.subtilis B-501 or Gram-negative bacterium E.coli DH5-alpha at concentrations up to 20 uM. Functionally, shows no antimicrobial activity against Gram-positive bacterium B.subtilis B-501 or Gram-negative bacterium E.coli DH5-alpha at concentrations up to 20 uM. Shows no toxicity towards insect (S.carnaria) larvae. The polypeptide is M-zodatoxin-Lt4a (Lachesana tarabaevi (Spider)).